Reading from the N-terminus, the 40-residue chain is Natriuretic peptide PtNP-a (40 aa).

A disulfide bridge links C9 with C25. Residues 17-34 (ISNTSGMGCRNPIQNRPK) are compositionally biased toward polar residues. The segment at 17 to 40 (ISNTSGMGCRNPIQNRPKSTPGGS) is disordered.

It belongs to the natriuretic peptide family. In terms of tissue distribution, expressed by the venom gland.

It is found in the secreted. Its function is as follows. Snake venom natriuretic peptide that targets NPR1 and possibly NPR2. Exhibits hypotensive and vasodepressor activities. Recombinant PtNP-a demonstrates a dose-dependent stimulation of cGMP production via the natriuretic peptide receptor 1 (NPR1) (EC(50)=563 nM) in Madine Darby Canine Kidney (MDCK) cells. It also inhibits the angiotensin converting enzyme (ACE). The sequence is that of Natriuretic peptide PtNP-a from Pseudonaja textilis (Eastern brown snake).